Reading from the N-terminus, the 192-residue chain is MNAIWIAVAAVSLLGLAFGAILGYASRRFAVEDDPVVEKIDEILPQSQCGQCGYPGCRPYAEAISCNGEKINRCAPGGEAVMLKIAELLNVEAQPLDGEAQELTPARMVAVIDENNCIGCTKCIQACPVDAIVGATRAMHTVMSDLCTGCNLCVDPCPTHCISLQPVAETPDSWKWDLNTIPVRIIPVEHHA.

The segment at 1–26 is hydrophobic; that stretch reads MNAIWIAVAAVSLLGLAFGAILGYAS. The 4Fe-4S domain maps to 32–91; the sequence is EDDPVVEKIDEILPQSQCGQCGYPGCRPYAEAISCNGEKINRCAPGGEAVMLKIAELLNV. [4Fe-4S] cluster is bound by residues Cys-49, Cys-52, Cys-57, Cys-74, Cys-117, Cys-120, Cys-123, Cys-127, Cys-147, Cys-150, Cys-153, and Cys-157. 4Fe-4S ferredoxin-type domains are found at residues 108 to 137 and 138 to 167; these read MVAVIDENNCIGCTKCIQACPVDAIVGATR and AMHTVMSDLCTGCNLCVDPCPTHCISLQPV.

It belongs to the 4Fe4S bacterial-type ferredoxin family. RnfB subfamily. As to quaternary structure, the complex is composed of six subunits: RsxA, RsxB, RsxC, RsxD, RsxE and RsxG. [4Fe-4S] cluster serves as cofactor.

It is found in the cell inner membrane. Its function is as follows. Part of a membrane-bound complex that couples electron transfer with translocation of ions across the membrane. Required to maintain the reduced state of SoxR. The protein is Ion-translocating oxidoreductase complex subunit B of Shigella dysenteriae serotype 1 (strain Sd197).